A 979-amino-acid chain; its full sequence is MHC class II regulatory factor RFX1 (979 aa).

3 disordered regions span residues 1–136 (MATQ…QVVQ), 181–227 (QSAA…PTGT), and 370–405 (TSTGAGASNSSGGGGSGGGGGGGGGGGGGGSGSTGG). Residues 12–44 (APPPSQPPQAPPQAQPQPPPPPPPAAPQPPQPP) are compositionally biased toward pro residues. Residues 45–73 (TAAATPQPQYVTELQSPQPQAQPPGGQKQ) are compositionally biased toward low complexity. A Phosphoserine modification is found at serine 60. Residues 81 to 96 (VPAPSQPTGAPTPSPA) are compositionally biased toward pro residues. The span at 114-126 (ETVSEASPGSTAS) shows a compositional bias: polar residues. The span at 127–136 (QTGVPTQVVQ) shows a compositional bias: low complexity. Polar residues-rich tracts occupy residues 190-203 (GQVSLTVHGTQQVH) and 209-220 (SPVQANSSSSKT). Low complexity predominate over residues 370-379 (TSTGAGASNS). The segment covering 380–405 (SGGGGSGGGGGGGGGGGGGGSGSTGG) has biased composition (gly residues). A DNA-binding region (RFX-type winged-helix) is located at residues 438–513 (TVQWLLDNYE…YHYYGLRIKA (76 aa)). Positions 744 to 979 (FAQTLRRYTS…GLFVQALPSS (236 aa)) are necessary for dimerization. The disordered stretch occupies residues 915–960 (SLNPLDPDKDEEEEEEEESEDELPQDISLAAGGESPALGPETLEPP). The segment covering 922-938 (DKDEEEEEEEESEDELP) has biased composition (acidic residues). Phosphoserine is present on residues serine 978 and serine 979.

The protein belongs to the RFX family. Homodimer; binds DNA as a homodimer. Heterodimer; heterodimerizes with RFX2 and RFX3.

The protein resides in the nucleus. Functionally, regulatory factor essential for MHC class II genes expression. Binds to the X boxes of MHC class II genes. Also binds to an inverted repeat (ENH1) required for hepatitis B virus genes expression and to the most upstream element (alpha) of the RPL30 promoter. This is MHC class II regulatory factor RFX1 (RFX1) from Homo sapiens (Human).